A 407-amino-acid polypeptide reads, in one-letter code: Substance-P receptor (407 aa).

Residues 1 to 31 are Extracellular-facing; it reads MDNVLPVDSDLSPNISTNTSEPNQFVQPAWQ. N-linked (GlcNAc...) asparagine glycans are attached at residues Asn14 and Asn18. Residues 32–54 traverse the membrane as a helical segment; sequence IVLWAAAYTVIVVTSVVGNVVVM. At 55–64 the chain is on the cytoplasmic side; it reads WIILAHKRMR. The helical transmembrane segment at 65-86 threads the bilayer; sequence TVTNYFLVNLAFAEASMAAFNT. Residues 87–106 lie on the Extracellular side of the membrane; the sequence is VVNFTYAVHNEWYYGLFYCK. Residues Cys105 and Cys180 are joined by a disulfide bond. A helical membrane pass occupies residues 107-128; that stretch reads FHNFFPIAAVFASIYSMTAVAF. The Cytoplasmic portion of the chain corresponds to 129 to 148; sequence DRYMAIIHPLQPRLSATATK. The chain crosses the membrane as a helical span at residues 149–169; it reads VVICVIWVLALLLAFPQGYYS. The Extracellular portion of the chain corresponds to 170-194; it reads TTETMPSRVVCMIEWPEHPNKIYEK. Residues 195–219 traverse the membrane as a helical segment; that stretch reads VYHICVTVLIYFLPLLVIGYAYTVV. His197 serves as a coordination point for CP-96345. Residues 220–248 are Cytoplasmic-facing; that stretch reads GITLWASEIPGDSSDRYHEQVSAKRKVVK. Residues 249-270 form a helical membrane-spanning segment; the sequence is MMIVVVCTFAICWLPFHIFFLL. Residues 271 to 283 lie on the Extracellular side of the membrane; it reads PYINPDLYLKKFI. The chain crosses the membrane as a helical span at residues 284 to 308; that stretch reads QQVYLAIMWLAMSSTMYNPIIYCCL. Residues 309 to 407 are Cytoplasmic-facing; the sequence is NDRFRLGFKH…SFSFSSNVLS (99 aa). A lipid anchor (S-palmitoyl cysteine) is attached at Cys322. The tract at residues 364–407 is disordered; it reads AHEEEPEDGPKATPSSLDLTSNCSSRSDSKTMTESFSFSSNVLS. Residues 376 to 407 are compositionally biased toward polar residues; that stretch reads TPSSLDLTSNCSSRSDSKTMTESFSFSSNVLS.

This sequence belongs to the G-protein coupled receptor 1 family. Interacts with ARRB1.

Its subcellular location is the cell membrane. This is a receptor for the tachykinin neuropeptide substance P. It is probably associated with G proteins that activate a phosphatidylinositol-calcium second messenger system. The rank order of affinity of this receptor to tachykinins is: substance P &gt; substance K &gt; neuromedin-K. This chain is Substance-P receptor (TACR1), found in Homo sapiens (Human).